The following is a 140-amino-acid chain: Translation initiation factor 2 subunit beta (140 aa).

This sequence belongs to the eIF-2-beta/eIF-5 family. As to quaternary structure, heterotrimer composed of an alpha, a beta and a gamma chain.

In terms of biological role, eIF-2 functions in the early steps of protein synthesis by forming a ternary complex with GTP and initiator tRNA. In Pyrococcus abyssi (strain GE5 / Orsay), this protein is Translation initiation factor 2 subunit beta (eif2b).